Reading from the N-terminus, the 414-residue chain is Serine/threonine transporter SstT (414 aa).

Transmembrane regions (helical) follow at residues 16–36 (GSLV…AWIS), 46–66 (LGTL…LMLV), 84–104 (ILFL…VFSF), 143–163 (ALLN…GFAL), 180–200 (AVTF…FGLV), 219–239 (LVVL…LLVF), 300–320 (MAGA…TLGV), and 332–352 (VVAS…LLLI).

The protein belongs to the dicarboxylate/amino acid:cation symporter (DAACS) (TC 2.A.23) family.

The protein localises to the cell inner membrane. It carries out the reaction L-serine(in) + Na(+)(in) = L-serine(out) + Na(+)(out). The enzyme catalyses L-threonine(in) + Na(+)(in) = L-threonine(out) + Na(+)(out). In terms of biological role, involved in the import of serine and threonine into the cell, with the concomitant import of sodium (symport system). The chain is Serine/threonine transporter SstT from Salmonella agona (strain SL483).